The primary structure comprises 491 residues: Argininosuccinate lyase (491 aa).

It belongs to the lyase 1 family. Argininosuccinate lyase subfamily.

The protein resides in the cytoplasm. It carries out the reaction 2-(N(omega)-L-arginino)succinate = fumarate + L-arginine. It functions in the pathway amino-acid biosynthesis; L-arginine biosynthesis; L-arginine from L-ornithine and carbamoyl phosphate: step 3/3. This Methanosarcina barkeri (strain Fusaro / DSM 804) protein is Argininosuccinate lyase.